Consider the following 890-residue polypeptide: Protein translocase subunit SecA (890 aa).

ATP contacts are provided by residues Q86, 104-108 (GEGKT), and D493. Residues 851 to 872 (EASHGDGDAKKAPVVKKEESGR) are compositionally biased toward basic and acidic residues. Residues 851–873 (EASHGDGDAKKAPVVKKEESGRN) are disordered. Residues C876, C878, C887, and C888 each coordinate Zn(2+).

This sequence belongs to the SecA family. Monomer and homodimer. Part of the essential Sec protein translocation apparatus which comprises SecA, SecYEG and auxiliary proteins SecDF. Other proteins may also be involved. Zn(2+) serves as cofactor.

Its subcellular location is the cell membrane. The protein resides in the cytoplasm. It carries out the reaction ATP + H2O + cellular proteinSide 1 = ADP + phosphate + cellular proteinSide 2.. Functionally, part of the Sec protein translocase complex. Interacts with the SecYEG preprotein conducting channel. Has a central role in coupling the hydrolysis of ATP to the transfer of proteins into and across the cell membrane, serving as an ATP-driven molecular motor driving the stepwise translocation of polypeptide chains across the membrane. The polypeptide is Protein translocase subunit SecA (Alkaliphilus oremlandii (strain OhILAs) (Clostridium oremlandii (strain OhILAs))).